The primary structure comprises 67 residues: Protein C' (67 aa).

Belongs to the rhabdoviruses C protein family.

Functionally, seems to stimulates transcription by the viral polymerase. May play a role in viral pathogenesis or transmission by insects vectors. The sequence is that of Protein C' (P) from Aedes (Bovine).